We begin with the raw amino-acid sequence, 272 residues long: Auxin-responsive protein IAA5 (272 aa).

The disordered stretch occupies residues 1-92 (MSPPLEPHDY…DSSPRHGASS (92 aa)). 2 stretches are compositionally biased toward low complexity: residues 14–33 (SAAA…SPNP) and 40–50 (PRLTLRLGLPG). The short motif at 44–48 (LRLGL) is the EAR-like (transcriptional repression) element. One can recognise a PB1 domain in the interval 152–256 (PLYVKVSMDG…RKLKIMRGSD (105 aa)).

It belongs to the Aux/IAA family. As to quaternary structure, homodimers and heterodimers. Highly expressed in roots and flowers. Expressed in shoots.

Its subcellular location is the nucleus. Its function is as follows. Aux/IAA proteins are short-lived transcriptional factors that function as repressors of early auxin response genes at low auxin concentrations. The protein is Auxin-responsive protein IAA5 (IAA5) of Oryza sativa subsp. indica (Rice).